We begin with the raw amino-acid sequence, 657 residues long: Pentatricopeptide repeat-containing protein At5g44230 (657 aa).

12 PPR repeats span residues 45-79 (KELL…GLDQ), 80-112 (SCYI…VQFR), 113-147 (NPFL…EITP), 148-178 (VSFT…TFRL), 183-213 (FVYV…MPER), 214-244 (DVIS…LPTK), 245-279 (DMVA…GIRA), 280-314 (DEVT…GYSP), 317-347 (HVVI…MNNK), 348-383 (NVFT…EIKP), 384-419 (NTVT…GVQP), and 420-450 (TRDH…MSVE). The interval 455 to 530 (VWGALLGACR…TPAVSWVVDK (76 aa)) is type E motif. Positions 532–562 (GQMHKFFPGNLNHPMSNKIQDKLEELVERLT) are type E(+) motif. A type DYW motif region spans residues 563-657 (VLGYQPDLSS…SGDCSCGDFW (95 aa)).

It belongs to the PPR family. PCMP-H subfamily.

The chain is Pentatricopeptide repeat-containing protein At5g44230 (PCMP-H17) from Arabidopsis thaliana (Mouse-ear cress).